The following is a 309-amino-acid chain: Dioxygenase af480 (309 aa).

Fe cation is bound by residues His153, Asp155, and His228.

It belongs to the PhyH family. It depends on Fe cation as a cofactor.

It carries out the reaction 5-dehydro-6-demethoxyfumagillol + 2-oxoglutarate + O2 = 5-dehydro-6-demethoxy-6-hydroxyfumagillol + succinate + CO2. It participates in secondary metabolite biosynthesis; terpenoid biosynthesis. Dioxygenase; part of the gene cluster that mediates the biosynthesis of fumagillin, a meroterpenoid that has numerous biological activities including irreversible inhibition of human type 2 methionine aminopeptidase (METAP2). Within the pathway, the dioxygenase af480 acts as a 5-dehydro-6-demethoxyfumagillol dioxygenase that hydroylates 5-keto-demethoxyfumagillol at position C-6. The pathway begins with the conversion of farnesyl pyrophosphate (FPP) to beta-trans-bergamotene by the membrane-bound beta-trans-bergamotene synthase af520. The multifunctional cytochrome P450 monooxygenase af510 then converts beta-trans-bergamotene into 5-keto-demethoxyfumagillol via several oxydation steps. 5-keto-demethoxyfumagillol is then subjected to successive C-6 hydroxylation and O-methylation by the dioxygenase af480 and O-methyltransferase af390-400, respectively, to yield 5-keto-fumagillol, which is then stereoselectively reduced by the keto-reductase af490 to 5R-hydroxy-seco-sesquiterpene. The next step is the polyketide transferase af380-catalyzed transfer of a dodecapentaenoyl group synthesized by the polyketide synthase af370 onto 5R-hydroxy-seco-sesquiterpene which leads to the production of prefumagillin. Finally, oxidative cleavage by the monooxygenase af470 converts prefumagillin to fumagillin. In Aspergillus fumigatus (strain ATCC MYA-4609 / CBS 101355 / FGSC A1100 / Af293) (Neosartorya fumigata), this protein is Dioxygenase af480.